A 306-amino-acid polypeptide reads, in one-letter code: Methionyl-tRNA formyltransferase (306 aa).

Residue 109–112 (SILP) coordinates (6S)-5,6,7,8-tetrahydrofolate.

The protein belongs to the Fmt family.

The enzyme catalyses L-methionyl-tRNA(fMet) + (6R)-10-formyltetrahydrofolate = N-formyl-L-methionyl-tRNA(fMet) + (6S)-5,6,7,8-tetrahydrofolate + H(+). Attaches a formyl group to the free amino group of methionyl-tRNA(fMet). The formyl group appears to play a dual role in the initiator identity of N-formylmethionyl-tRNA by promoting its recognition by IF2 and preventing the misappropriation of this tRNA by the elongation apparatus. This Sphingopyxis alaskensis (strain DSM 13593 / LMG 18877 / RB2256) (Sphingomonas alaskensis) protein is Methionyl-tRNA formyltransferase.